We begin with the raw amino-acid sequence, 828 residues long: Protein kintoun (828 aa).

5 disordered regions span residues 1–31, 223–250, 383–424, 556–668, and 741–828; these read MSGS…DEPI, KNPT…EGEP, DSGV…PTSN, APVQ…HRGI, and KKNQ…EDLI. The segment covering 9–22 has biased composition (basic residues); it reads RNKHSKGNLKHNNN. The residue at position 384 (serine 384) is a Phosphoserine. Acidic residues predominate over residues 395–414; sequence PVEEEEDGEDEIEAEEEEEE. The span at 556–573 shows a compositional bias: basic and acidic residues; the sequence is APVQEDKPGDIQFKRNDQ. Over residues 591–601 the composition is skewed to acidic residues; it reads EREEGEIEEAE. Residues 606 to 620 show a composition bias toward basic residues; that stretch reads KKSASKKQRGKRNKK. Over residues 625 to 641 the composition is skewed to polar residues; sequence SESACVSLPTSVDSQPM. Residues 741–755 show a composition bias toward basic residues; sequence KKNQKRRDCKLRAQQ. Position 759 is a phosphoserine (serine 759). The span at 788 to 808 shows a compositional bias: basic and acidic residues; sequence DSGLDLTRHNKKRELAEEADN. The span at 815–828 shows a compositional bias: acidic residues; sequence EMDDDDDDEDEDLI.

It belongs to the PIH1 family. Kintoun subfamily. Interacts with Pp1alpha-96A, Pp1-87B, Pp1-13C and flw.

It localises to the cytoplasm. In terms of biological role, required for cytoplasmic pre-assembly of axonemal dyneins, thereby playing a central role in motility in cilia and flagella. Involved in pre-assembly of dynein arm complexes in the cytoplasm before intraflagellar transport loads them for the ciliary compartment. The sequence is that of Protein kintoun from Drosophila willistoni (Fruit fly).